An 81-amino-acid chain; its full sequence is Sec-independent protein translocase protein TatA (81 aa).

The helical transmembrane segment at 1 to 21 (MGGISIWQLLIVALIVILLFG) threads the bilayer. Residues 34–81 (GAVKGFKNAMTPEDENKSLDDKEKDQTAATSQQAAEKQPETESKDKQA) are disordered. Basic and acidic residues-rich tracts occupy residues 47 to 59 (DENKSLDDKEKDQ) and 70 to 81 (KQPETESKDKQA).

It belongs to the TatA/E family. In terms of assembly, the Tat system comprises two distinct complexes: a TatABC complex, containing multiple copies of TatA, TatB and TatC subunits, and a separate TatA complex, containing only TatA subunits. Substrates initially bind to the TatABC complex, which probably triggers association of the separate TatA complex to form the active translocon.

Its subcellular location is the cell inner membrane. Part of the twin-arginine translocation (Tat) system that transports large folded proteins containing a characteristic twin-arginine motif in their signal peptide across membranes. TatA could form the protein-conducting channel of the Tat system. The chain is Sec-independent protein translocase protein TatA from Shewanella frigidimarina (strain NCIMB 400).